The following is a 293-amino-acid chain: CDP-abequose synthase (293 aa).

A substrate-binding site is contributed by T113. Y130 acts as the Proton acceptor in catalysis.

Belongs to the NAD(P)-dependent epimerase/dehydratase family.

The catalysed reaction is CDP-alpha-D-abequose + NADP(+) = CDP-4-dehydro-3,6-dideoxy-alpha-D-glucose + NADPH + H(+). Its pathway is bacterial outer membrane biogenesis; LPS O-antigen biosynthesis. The sequence is that of CDP-abequose synthase from Salmonella muenchen.